Consider the following 189-residue polypeptide: B3 domain-containing protein At2g32645 (189 aa).

Positions 33–133 form a DNA-binding region, TF-B3; sequence FNQVKTPDFL…KLCFALTPKI (101 aa).

The protein localises to the nucleus. The sequence is that of B3 domain-containing protein At2g32645 from Arabidopsis thaliana (Mouse-ear cress).